The sequence spans 60 residues: Cytotoxin 2 (60 aa).

4 disulfides stabilise this stretch: Cys3-Cys21, Cys14-Cys38, Cys42-Cys53, and Cys54-Cys59.

The protein belongs to the three-finger toxin family. Short-chain subfamily. Type IA cytotoxin sub-subfamily. Monomer in solution; Homodimer and oligomer in the presence of negatively charged lipids forming a pore with a size ranging between 20 and 30 Angstroms. Expressed by the venom gland.

Its subcellular location is the secreted. The protein resides in the target cell membrane. Functionally, this three-finger cytotoxin is a basic protein that interacts and penetrates into the cell membrane, with the tips of all the three loops. Cytotoxins which have a Pro-30 (P-type) interacts with membrane stronger that those which have a 'Ser-28' (S-type). CTII interacts with membrane stronger than CTI. The polypeptide is Cytotoxin 2 (Naja oxiana (Central Asian cobra)).